A 165-amino-acid polypeptide reads, in one-letter code: Shikimate kinase (165 aa).

12-17 (GCGKST) is an ATP binding site. Serine 16 lines the Mg(2+) pocket. Positions 34, 57, and 79 each coordinate substrate. Arginine 116 lines the ATP pocket. A substrate-binding site is contributed by arginine 133.

The protein belongs to the shikimate kinase family. In terms of assembly, monomer. Mg(2+) serves as cofactor.

The protein localises to the cytoplasm. The catalysed reaction is shikimate + ATP = 3-phosphoshikimate + ADP + H(+). Its pathway is metabolic intermediate biosynthesis; chorismate biosynthesis; chorismate from D-erythrose 4-phosphate and phosphoenolpyruvate: step 5/7. Its function is as follows. Catalyzes the specific phosphorylation of the 3-hydroxyl group of shikimic acid using ATP as a cosubstrate. In Clostridium botulinum (strain Alaska E43 / Type E3), this protein is Shikimate kinase.